Reading from the N-terminus, the 523-residue chain is uncharacterized protein (523 aa).

Polar residues predominate over residues 1–14; sequence MAVSKNIKSNVSTH. Disordered stretches follow at residues 1–36, 51–187, and 200–224; these read MAVSKNIKSNVSTHVTKKATKKTTNNGEESKTVKKA, HSSE…VVSS, and QKQEKEEEKQPKLVGHTNEADEMEK. Over residues 87 to 97 the composition is skewed to basic and acidic residues; sequence DNRGTRLKGDI. 2 stretches are compositionally biased toward acidic residues: residues 117–130 and 138–182; these read DMEEDDELDQDNEY and QDDD…DDEN. Over residues 200–210 the composition is skewed to basic and acidic residues; sequence QKQEKEEEKQP.

The protein belongs to the AATF family.

This is an uncharacterized protein from Dictyostelium discoideum (Social amoeba).